The sequence spans 194 residues: Small ribosomal subunit protein uS7 (194 aa).

It belongs to the universal ribosomal protein uS7 family. Part of the 30S ribosomal subunit.

In terms of biological role, one of the primary rRNA binding proteins, it binds directly to 16S rRNA where it nucleates assembly of the head domain of the 30S subunit. Is located at the subunit interface close to the decoding center. The sequence is that of Small ribosomal subunit protein uS7 from Archaeoglobus fulgidus (strain ATCC 49558 / DSM 4304 / JCM 9628 / NBRC 100126 / VC-16).